Consider the following 111-residue polypeptide: Universal stress protein B (111 aa).

Helical transmembrane passes span 1–21 (MIST…NMAR) and 90–110 (FILT…LLIW).

Belongs to the universal stress protein B family.

The protein resides in the cell inner membrane. The sequence is that of Universal stress protein B from Enterobacter sp. (strain 638).